Here is a 226-residue protein sequence, read N- to C-terminus: Enolase-phosphatase E1 (226 aa).

The protein belongs to the HAD-like hydrolase superfamily. MasA/MtnC family. In terms of assembly, monomer. It depends on Mg(2+) as a cofactor.

The catalysed reaction is 5-methylsulfanyl-2,3-dioxopentyl phosphate + H2O = 1,2-dihydroxy-5-(methylsulfanyl)pent-1-en-3-one + phosphate. Its pathway is amino-acid biosynthesis; L-methionine biosynthesis via salvage pathway; L-methionine from S-methyl-5-thio-alpha-D-ribose 1-phosphate: step 3/6. The protein operates within amino-acid biosynthesis; L-methionine biosynthesis via salvage pathway; L-methionine from S-methyl-5-thio-alpha-D-ribose 1-phosphate: step 4/6. Its function is as follows. Bifunctional enzyme that catalyzes the enolization of 2,3-diketo-5-methylthiopentyl-1-phosphate (DK-MTP-1-P) into the intermediate 2-hydroxy-3-keto-5-methylthiopentenyl-1-phosphate (HK-MTPenyl-1-P), which is then dephosphorylated to form the acireductone 1,2-dihydroxy-3-keto-5-methylthiopentene (DHK-MTPene). The sequence is that of Enolase-phosphatase E1 from Shewanella pealeana (strain ATCC 700345 / ANG-SQ1).